Consider the following 155-residue polypeptide: uncharacterized protein (155 aa).

2 helical membrane passes run I33–L53 and I83–V103.

The protein to E.coli YdgK.

It is found in the cell membrane. This is an uncharacterized protein from Synechocystis sp. (strain ATCC 27184 / PCC 6803 / Kazusa).